The sequence spans 206 residues: Purine nucleoside phosphorylase aq_167 (206 aa).

Residues histidine 42, cysteine 78, and histidine 93 each coordinate Zn(2+).

Belongs to the purine nucleoside phosphorylase YfiH/LACC1 family. As to quaternary structure, homodimer. Requires Cu(2+) as cofactor. Zn(2+) is required as a cofactor.

It carries out the reaction adenosine + phosphate = alpha-D-ribose 1-phosphate + adenine. It catalyses the reaction S-methyl-5'-thioadenosine + phosphate = 5-(methylsulfanyl)-alpha-D-ribose 1-phosphate + adenine. The enzyme catalyses inosine + phosphate = alpha-D-ribose 1-phosphate + hypoxanthine. The catalysed reaction is adenosine + H2O + H(+) = inosine + NH4(+). Functionally, purine nucleoside enzyme that catalyzes the phosphorolysis of adenosine and inosine nucleosides, yielding D-ribose 1-phosphate and the respective free bases, adenine and hypoxanthine. Also catalyzes the phosphorolysis of S-methyl-5'-thioadenosine into adenine and S-methyl-5-thio-alpha-D-ribose 1-phosphate. Also has adenosine deaminase activity. The polypeptide is Purine nucleoside phosphorylase aq_167 (Aquifex aeolicus (strain VF5)).